Here is a 446-residue protein sequence, read N- to C-terminus: Serum factor response D (446 aa).

The 61-residue stretch at 1 to 61 folds into the MADS-box domain; that stretch reads MGRKKIKIQR…PNAKEKYFQY (61 aa). 3 disordered regions span residues 95–195, 210–296, and 319–432; these read KKEK…FNSS, TQEN…CQQV, and CSSP…SNLN. Positions 112 to 121 are enriched in basic and acidic residues; the sequence is SHSEEEDHKS. Residues 133-142 are compositionally biased toward basic residues; sequence HHNHHHHHHQ. 2 stretches are compositionally biased toward low complexity: residues 143–195 and 216–282; these read YNNN…FNSS and HYNN…NNNN. The segment covering 322–355 has biased composition (polar residues); sequence PEDTSPMTSPRTPPFSSTNTNTLQTSPNSQQKSK. The segment covering 365 to 432 has biased composition (low complexity); that stretch reads NNNQNNNNQN…SPTSSSSNLN (68 aa).

It localises to the nucleus. This is Serum factor response D (srfD) from Dictyostelium discoideum (Social amoeba).